The chain runs to 419 residues: Phosphoribosylamine--glycine ligase (419 aa).

In terms of domain architecture, ATP-grasp spans 109–311; it reads KQLLIEAGVP…LEKVLMACVE (203 aa). 135–191 is an ATP binding site; the sequence is ATKMGAPIVVKADGLAAGKGVIVAQTSAEATTAIAELFDQGFEKIVVEEFLPGEEVS. Mg(2+) is bound by residues Glu-281 and Asn-283.

The protein belongs to the GARS family. Mg(2+) serves as cofactor. The cofactor is Mn(2+).

The enzyme catalyses 5-phospho-beta-D-ribosylamine + glycine + ATP = N(1)-(5-phospho-beta-D-ribosyl)glycinamide + ADP + phosphate + H(+). It participates in purine metabolism; IMP biosynthesis via de novo pathway; N(1)-(5-phospho-D-ribosyl)glycinamide from 5-phospho-alpha-D-ribose 1-diphosphate: step 2/2. This chain is Phosphoribosylamine--glycine ligase, found in Synechocystis sp. (strain ATCC 27184 / PCC 6803 / Kazusa).